The following is a 450-amino-acid chain: Phosphoglucosamine mutase (450 aa).

Ser102 functions as the Phosphoserine intermediate in the catalytic mechanism. Mg(2+)-binding residues include Ser102, Asp244, Asp246, and Asp248. Ser102 bears the Phosphoserine mark.

Belongs to the phosphohexose mutase family. Mg(2+) serves as cofactor. Activated by phosphorylation.

It carries out the reaction alpha-D-glucosamine 1-phosphate = D-glucosamine 6-phosphate. Functionally, catalyzes the conversion of glucosamine-6-phosphate to glucosamine-1-phosphate. The polypeptide is Phosphoglucosamine mutase (Bartonella bacilliformis (strain ATCC 35685 / KC583 / Herrer 020/F12,63)).